The chain runs to 372 residues: 18-hydroxynorfluorocurarine reductase (372 aa).

9 residues coordinate Zn(2+): Cys-47, Asp-50, His-69, Glu-70, Cys-100, Cys-103, Cys-106, Cys-114, and Cys-172. NADP(+) contacts are provided by residues 197–202 (GLGGIG), Lys-226, 283–285 (LGA), Ser-307, and Arg-354.

This sequence belongs to the zinc-containing alcohol dehydrogenase family. Homodimer. Requires Zn(2+) as cofactor.

The enzyme catalyses (19E)-cur-19-en-17-al + NADP(+) = norfluorocurarine + NADPH + H(+). It catalyses the reaction 17,18-epoxy-17-hydroxycur-19-ene + NADP(+) = 18-hydroxynorfluorocurarine + NADPH + H(+). It functions in the pathway alkaloid biosynthesis. Alcohol dehydrogenase involved in the biosynthesis of curare monoterpene indole alkaloids (MIAs), natural products such as diaboline, a pharmacologically active compound used to regulate blood pressure. Curare alkaloids act as animal glycine receptor antagonists. Catalyzes the conversion of norfluorocurarine to desoxy Wieland-Gumlich aldehyde, and of 18-OH norfluorocurarine to Wieland-Gumlich aldehyde. This is 18-hydroxynorfluorocurarine reductase from Strychnos sp.